The sequence spans 270 residues: Formamidopyrimidine-DNA glycosylase (270 aa).

The Schiff-base intermediate with DNA role is filled by P2. E3 (proton donor) is an active-site residue. The Proton donor; for beta-elimination activity role is filled by K58. Residues H91, R110, and R151 each contribute to the DNA site. The FPG-type zinc-finger motif lies at 236-270 (FAYGRAGEFCKVCGTTLREVKLGQRASVYCPRCQR). R260 acts as the Proton donor; for delta-elimination activity in catalysis.

Belongs to the FPG family. As to quaternary structure, monomer. The cofactor is Zn(2+).

The enzyme catalyses Hydrolysis of DNA containing ring-opened 7-methylguanine residues, releasing 2,6-diamino-4-hydroxy-5-(N-methyl)formamidopyrimidine.. It catalyses the reaction 2'-deoxyribonucleotide-(2'-deoxyribose 5'-phosphate)-2'-deoxyribonucleotide-DNA = a 3'-end 2'-deoxyribonucleotide-(2,3-dehydro-2,3-deoxyribose 5'-phosphate)-DNA + a 5'-end 5'-phospho-2'-deoxyribonucleoside-DNA + H(+). Its function is as follows. Involved in base excision repair of DNA damaged by oxidation or by mutagenic agents. Acts as a DNA glycosylase that recognizes and removes damaged bases. Has a preference for oxidized purines, such as 7,8-dihydro-8-oxoguanine (8-oxoG). Has AP (apurinic/apyrimidinic) lyase activity and introduces nicks in the DNA strand. Cleaves the DNA backbone by beta-delta elimination to generate a single-strand break at the site of the removed base with both 3'- and 5'-phosphates. This Ectopseudomonas mendocina (strain ymp) (Pseudomonas mendocina) protein is Formamidopyrimidine-DNA glycosylase.